The sequence spans 203 residues: Imidazoleglycerol-phosphate dehydratase (203 aa).

Positions 184–203 (DPRRSSQIPSSKGVLEQAGQ) are disordered.

This sequence belongs to the imidazoleglycerol-phosphate dehydratase family.

The protein resides in the cytoplasm. It catalyses the reaction D-erythro-1-(imidazol-4-yl)glycerol 3-phosphate = 3-(imidazol-4-yl)-2-oxopropyl phosphate + H2O. The protein operates within amino-acid biosynthesis; L-histidine biosynthesis; L-histidine from 5-phospho-alpha-D-ribose 1-diphosphate: step 6/9. This Prochlorococcus marinus (strain NATL1A) protein is Imidazoleglycerol-phosphate dehydratase.